The sequence spans 130 residues: Small ribosomal subunit protein uS9 (130 aa).

A disordered region spans residues 109–130; the sequence is RMKERKKYGLKGARRAPQFSKR. The segment covering 111–130 has biased composition (basic residues); sequence KERKKYGLKGARRAPQFSKR.

The protein belongs to the universal ribosomal protein uS9 family.

In Listeria innocua serovar 6a (strain ATCC BAA-680 / CLIP 11262), this protein is Small ribosomal subunit protein uS9.